Reading from the N-terminus, the 257-residue chain is Acetylglutamate kinase (257 aa).

Substrate is bound by residues 41–42 (GG), Arg-63, and Asn-155.

It belongs to the acetylglutamate kinase family. ArgB subfamily.

The protein resides in the cytoplasm. The enzyme catalyses N-acetyl-L-glutamate + ATP = N-acetyl-L-glutamyl 5-phosphate + ADP. It participates in amino-acid biosynthesis; L-arginine biosynthesis; N(2)-acetyl-L-ornithine from L-glutamate: step 2/4. Functionally, catalyzes the ATP-dependent phosphorylation of N-acetyl-L-glutamate. The protein is Acetylglutamate kinase of Solibacter usitatus (strain Ellin6076).